Consider the following 121-residue polypeptide: Small ribosomal subunit protein uS13 (121 aa).

The tract at residues 91–121 is disordered; sequence HRMSLPVRGQRTRTNARTRRGSRKTVAGRKK. The segment covering 100–121 has biased composition (basic residues); the sequence is QRTRTNARTRRGSRKTVAGRKK.

It belongs to the universal ribosomal protein uS13 family. Part of the 30S ribosomal subunit. Forms a loose heterodimer with protein S19. Forms two bridges to the 50S subunit in the 70S ribosome.

Functionally, located at the top of the head of the 30S subunit, it contacts several helices of the 16S rRNA. In the 70S ribosome it contacts the 23S rRNA (bridge B1a) and protein L5 of the 50S subunit (bridge B1b), connecting the 2 subunits; these bridges are implicated in subunit movement. Contacts the tRNAs in the A and P-sites. This chain is Small ribosomal subunit protein uS13, found in Prochlorococcus marinus (strain AS9601).